A 148-amino-acid polypeptide reads, in one-letter code: Lipid droplet organization protein LDO16 (148 aa).

At 1–7 (MVSTATF) the chain is on the cytoplasmic side. Residues 8–28 (FFFVYLTLFVVIGFFSSLFII) traverse the membrane as a helical segment. A topological domain (lumenal) is located at residue Pro29. Residues 30-50 (LLGISFVFAIGVVSFGFCSNM) traverse the membrane as a helical segment. At 51–148 (SFKMAQLIYV…NKAGNKFQLS (98 aa)) the chain is on the cytoplasmic side. Residues 83–110 (QEPQEPLSTLRPVSNPTIPSPLRQTARP) form a disordered region. A compositionally biased stretch (polar residues) spans 93-109 (RPVSNPTIPSPLRQTAR). Ser102 is modified (phosphoserine).

This sequence belongs to the OSW5 family. Interacts specifically with the seipin complex FLD1-LDB16. Only a fraction appears to associate with the seipin core components, suggesting that it may be an ancillary subunit of the complex. Found to interact with many mitochondrial and peroxisomal proteins.

It localises to the endoplasmic reticulum membrane. The protein localises to the lipid droplet. Functionally, involved in lipid droplet (LD) organization. Functions primarily upon nutrient depletion, facilitating LD consumption by lipophagy. Required for correct LD distribution during entry into stationary phase, where LDs accumulate at nucleus-vacuole junction (NVJ) contact sites. Involved in membrane interaction in a manner similar to those of SNARE proteins, binding to partners present in mitochondria or peroxisomes. Its partner on the mitochondrion side might be TOM22, a mitochondrial outer membrane protein, linking lipid droplets and mitochondria by protein-protein interaction. Involved in spore wall assembly. The protein is Lipid droplet organization protein LDO16 of Saccharomyces cerevisiae (strain ATCC 204508 / S288c) (Baker's yeast).